A 154-amino-acid polypeptide reads, in one-letter code: SsrA-binding protein (154 aa).

Belongs to the SmpB family.

The protein localises to the cytoplasm. In terms of biological role, required for rescue of stalled ribosomes mediated by trans-translation. Binds to transfer-messenger RNA (tmRNA), required for stable association of tmRNA with ribosomes. tmRNA and SmpB together mimic tRNA shape, replacing the anticodon stem-loop with SmpB. tmRNA is encoded by the ssrA gene; the 2 termini fold to resemble tRNA(Ala) and it encodes a 'tag peptide', a short internal open reading frame. During trans-translation Ala-aminoacylated tmRNA acts like a tRNA, entering the A-site of stalled ribosomes, displacing the stalled mRNA. The ribosome then switches to translate the ORF on the tmRNA; the nascent peptide is terminated with the 'tag peptide' encoded by the tmRNA and targeted for degradation. The ribosome is freed to recommence translation, which seems to be the essential function of trans-translation. This Synechocystis sp. (strain ATCC 27184 / PCC 6803 / Kazusa) protein is SsrA-binding protein.